The sequence spans 196 residues: MEAVTAIKPLIRVAALSGSLRKTSFHTGLLRAAIDLTKESVPGLQIEYIDISPLPLINTDLEVNGTYPPVVEAFRQKILEADSILFASPEYNFSVSAPLKNALDWASRPPNVWADKPAAIISTGGGFGGGRSQYHLRQIGVFLDLHFINKPEFTLNAFQPPQKFDAEGNLVDEVTKERLKQVLLSLQAFTLRLQGK.

It belongs to the SsuE family. Homotetramer. FMN serves as cofactor.

It localises to the cell membrane. It catalyses the reaction a quinone + NADH + H(+) = a quinol + NAD(+). The catalysed reaction is a quinone + NADPH + H(+) = a quinol + NADP(+). Its function is as follows. The enzyme apparently serves as a quinone reductase in connection with conjugation reactions of hydroquinones involved in detoxification pathways. This is NADPH:quinone oxidoreductase (NQR) from Arabidopsis thaliana (Mouse-ear cress).